Consider the following 131-residue polypeptide: Small ribosomal subunit protein uS11 (131 aa).

This sequence belongs to the universal ribosomal protein uS11 family. In terms of assembly, part of the 30S ribosomal subunit. Interacts with proteins S7 and S18. Binds to IF-3.

Located on the platform of the 30S subunit, it bridges several disparate RNA helices of the 16S rRNA. Forms part of the Shine-Dalgarno cleft in the 70S ribosome. This Syntrophotalea carbinolica (strain DSM 2380 / NBRC 103641 / GraBd1) (Pelobacter carbinolicus) protein is Small ribosomal subunit protein uS11.